The following is a 727-amino-acid chain: ABC transporter G family member STR2 (727 aa).

Residues 1–475 (MKTQGLELET…NFTNIRRTPE (475 aa)) are Cytoplasmic-facing. The ABC transporter domain maps to 25 to 275 (LEFESLTYTV…LNRMGRKIPK (251 aa)). Residue 69 to 76 (GPSGAGKS) participates in ATP binding. The chain crosses the membrane as a helical span at residues 476 to 496 (LFLSRLMVLTFMGVMMATMFH). Residues 497–510 (NPKNTLQGITNRLS) are Extracellular-facing. A helical transmembrane segment spans residues 511–531 (FFIFTVCLFFFSSNDAVPAFI). Residues 532 to 559 (QERFIFIRETSHNAYRASCYTIASLITH) lie on the Cytoplasmic side of the membrane. The helical transmembrane segment at 560-580 (MPFLALQALAYAAIVWFALEL) threads the bilayer. The Extracellular portion of the chain corresponds to 581-583 (RGP). The chain crosses the membrane as a helical span at residues 584-604 (FIYFFLVLFISLLSTNSFVVF). At 605–612 (VSSIVPNY) the chain is on the cytoplasmic side. A helical membrane pass occupies residues 613 to 633 (ILGYAAVIAFTALFFLFCGYF). Topologically, residues 634–699 (LSSEDIPLYW…GTEEIKKRNN (66 aa)) are extracellular. A glycan (N-linked (GlcNAc...) asparagine) is linked at asparagine 667. The helical transmembrane segment at 700–720 (VLIMLGWAVLYRILFYIILRF) threads the bilayer. The Cytoplasmic segment spans residues 721–727 (ASKNQRS).

Belongs to the ABC transporter superfamily. ABCG family. Stunted arbuscule (STR) subfamily. In terms of assembly, heterodimerizes with STR; the resulting transporter is located in the peri-arbuscular membrane. As to expression, expressed constitutively in the vascular tissue of roots.

It localises to the cell membrane. Together with STR, required for arbuscule development in arbuscular mycorrhizal symbiosis. This chain is ABC transporter G family member STR2, found in Medicago truncatula (Barrel medic).